We begin with the raw amino-acid sequence, 264 residues long: Mitochondrial distribution and morphology protein 12 (264 aa).

The SMP-LTD domain maps to 1-232 (MSFDINWNKI…WPSWINLDFN (232 aa)). A disordered region spans residues 240–264 (ESSSSAEESLPHRDDAQDFSADARA). Residues 248-264 (SLPHRDDAQDFSADARA) are compositionally biased toward basic and acidic residues.

It belongs to the MDM12 family. As to quaternary structure, component of the ER-mitochondria encounter structure (ERMES) or MDM complex, composed of MMM1, MDM10, MDM12 and MDM34. An MMM1 homodimer associates with one molecule of MDM12 on each side in a pairwise head-to-tail manner, and the SMP-LTD domains of MMM1 and MDM12 generate a continuous hydrophobic tunnel for phospholipid trafficking.

It localises to the mitochondrion outer membrane. The protein localises to the endoplasmic reticulum membrane. In terms of biological role, component of the ERMES/MDM complex, which serves as a molecular tether to connect the endoplasmic reticulum (ER) and mitochondria. Components of this complex are involved in the control of mitochondrial shape and protein biogenesis, and function in nonvesicular lipid trafficking between the ER and mitochondria. MDM12 is required for the interaction of the ER-resident membrane protein MMM1 and the outer mitochondrial membrane-resident beta-barrel protein MDM10. The MDM12-MMM1 subcomplex functions in the major beta-barrel assembly pathway that is responsible for biogenesis of all mitochondrial outer membrane beta-barrel proteins, and acts in a late step after the SAM complex. The MDM10-MDM12-MMM1 subcomplex further acts in the TOM40-specific pathway after the action of the MDM12-MMM1 complex. Essential for establishing and maintaining the structure of mitochondria and maintenance of mtDNA nucleoids. The protein is Mitochondrial distribution and morphology protein 12 of Eremothecium gossypii (strain ATCC 10895 / CBS 109.51 / FGSC 9923 / NRRL Y-1056) (Yeast).